We begin with the raw amino-acid sequence, 302 residues long: Sulfate adenylyltransferase subunit 2 (302 aa).

The disordered stretch occupies residues 280–302 (RQGRLIDSDQSASMEQKKRQGYF).

It belongs to the PAPS reductase family. CysD subfamily. Heterodimer composed of CysD, the smaller subunit, and CysN.

The catalysed reaction is sulfate + ATP + H(+) = adenosine 5'-phosphosulfate + diphosphate. The protein operates within sulfur metabolism; hydrogen sulfide biosynthesis; sulfite from sulfate: step 1/3. In terms of biological role, with CysN forms the ATP sulfurylase (ATPS) that catalyzes the adenylation of sulfate producing adenosine 5'-phosphosulfate (APS) and diphosphate, the first enzymatic step in sulfur assimilation pathway. APS synthesis involves the formation of a high-energy phosphoric-sulfuric acid anhydride bond driven by GTP hydrolysis by CysN coupled to ATP hydrolysis by CysD. The sequence is that of Sulfate adenylyltransferase subunit 2 from Shewanella putrefaciens (strain CN-32 / ATCC BAA-453).